An 856-amino-acid chain; its full sequence is DNA mismatch repair protein MutS (856 aa).

Residue 605–612 coordinates ATP; that stretch reads GPNMSGKS.

This sequence belongs to the DNA mismatch repair MutS family.

In terms of biological role, this protein is involved in the repair of mismatches in DNA. It is possible that it carries out the mismatch recognition step. This protein has a weak ATPase activity. In Lysinibacillus sphaericus (strain C3-41), this protein is DNA mismatch repair protein MutS.